The chain runs to 226 residues: Protein YOP1 homolog (226 aa).

The interval 1-25 is disordered; sequence MRMSKLYKNKEKENEKPSNEPPIKQ. Topologically, residues 1-72 are cytoplasmic; the sequence is MRMSKLYKNK…IEFGYKLGIK (72 aa). Over residues 8 to 18 the composition is skewed to basic and acidic residues; the sequence is KNKEKENEKPS. A helical membrane pass occupies residues 73–92; it reads PSYIVVFGGSALFISLVLGW. Residues 93–94 lie on the Lumenal side of the membrane; it reads GA. The chain crosses the membrane as a helical span at residues 95-113; sequence ALICNLVGFAYPAYQSFKA. The Cytoplasmic portion of the chain corresponds to 114–123; sequence VESQGHAETK. Residues 124-140 traverse the membrane as a helical segment; the sequence is LWLTYWVVFSLFFFIEY. The Lumenal portion of the chain corresponds to 141–143; sequence LID. Residues 144–162 traverse the membrane as a helical segment; that stretch reads IILFWIPFYYVIKLLFLLY. Residues 163–226 are Cytoplasmic-facing; that stretch reads LYMPQVRGAE…VQEGVRRRNV (64 aa).

This sequence belongs to the DP1 family. In terms of assembly, may form oligomers.

It localises to the endoplasmic reticulum membrane. Functionally, required to generate and maintain the structure of the tubular endoplasmic reticulum network and the digestive (food) vacuole. Induces high curvature in membranes and causes membrane tubule formation. The protein is Protein YOP1 homolog of Plasmodium berghei (strain Anka).